The following is an 87-amino-acid chain: Putative regulatory protein BCG9842_B1272 (87 aa).

Belongs to the RemA family.

The protein is Putative regulatory protein BCG9842_B1272 of Bacillus cereus (strain G9842).